We begin with the raw amino-acid sequence, 221 residues long: Ubiquitin-conjugating enzyme E2 S (221 aa).

A UBC core domain is found at 11-157; it reads QVLRLVYKEV…AHLLTEIHAM (147 aa). Cys95 (glycyl thioester intermediate) is an active-site residue. A disordered region spans residues 158-221; it reads GGTSGAPQEP…TDKKRALRRL (64 aa). Positions 193–206 are enriched in low complexity; it reads GTGTNNSNISNTNI. The span at 208-221 shows a compositional bias: basic residues; the sequence is AKKKTDKKRALRRL.

Belongs to the ubiquitin-conjugating enzyme family.

The enzyme catalyses S-ubiquitinyl-[E1 ubiquitin-activating enzyme]-L-cysteine + [E2 ubiquitin-conjugating enzyme]-L-cysteine = [E1 ubiquitin-activating enzyme]-L-cysteine + S-ubiquitinyl-[E2 ubiquitin-conjugating enzyme]-L-cysteine.. It functions in the pathway protein modification; protein ubiquitination. Catalyzes the covalent attachment of ubiquitin to other proteins. Acts as an essential factor of the anaphase promoting complex/cyclosome (APC/C), a cell cycle-regulated ubiquitin ligase that controls progression through mitosis. Acts by specifically elongating 'Lys-11'-linked polyubiquitin chains initiated by the E2 enzyme ube2c/ubch10 on APC/C substrates, enhancing the degradation of APC/C substrates by the proteasome and promoting mitotic exit. In Danio rerio (Zebrafish), this protein is Ubiquitin-conjugating enzyme E2 S (ube2s).